The following is a 192-amino-acid chain: MELLGQKVKEDGVVIDEKILKVDGFLNHQIDAKLMNEVGRTFYEQFKDKGITKILTIEASGIAPAIMAALHFDVPCLFAKKAKPSTLTDGYYETSIHSFTKNKTSTVIVSKEFLSEEDTVLIIDDFLANGDASLGLYDIAQQANAKTAGIGIVVEKSFQNGHQRLEEAGLTVSSLCKVASLEGNKVTLVVEE.

Residues Leu20 and Asn27 each coordinate xanthine. Residue Ala128–Ala132 coordinates 5-phospho-alpha-D-ribose 1-diphosphate. Lys156 serves as a coordination point for xanthine.

Belongs to the purine/pyrimidine phosphoribosyltransferase family. Xpt subfamily. Homodimer.

It localises to the cytoplasm. The enzyme catalyses XMP + diphosphate = xanthine + 5-phospho-alpha-D-ribose 1-diphosphate. It participates in purine metabolism; XMP biosynthesis via salvage pathway; XMP from xanthine: step 1/1. Its function is as follows. Converts the preformed base xanthine, a product of nucleic acid breakdown, to xanthosine 5'-monophosphate (XMP), so it can be reused for RNA or DNA synthesis. The chain is Xanthine phosphoribosyltransferase from Staphylococcus aureus (strain JH1).